Reading from the N-terminus, the 366-residue chain is Envelope glycoprotein M (366 aa).

The Intravirion portion of the chain corresponds to 1–17 (MMKASRSDTFMLRTWIQ). Residues 18 to 38 (LLVLFVIMFIMSAILPIAASV) traverse the membrane as a helical segment. Topologically, residues 39–83 (EGLGFPCYFPNLVDYSLLNLTLRNAAKHLTPTLFLEAPELFVYIT) are virion surface. A helical membrane pass occupies residues 84-104 (WSVLVDLASAIYYVVGALAIL). Residues 105–113 (QARKTHLTS) lie on the Intravirion side of the membrane. The helical transmembrane segment at 114–134 (MITLQTWINLVGSHTMLFIGI) threads the bilayer. Residues 135-153 (ARMWTLQLFIHVLSYKHVM) lie on the Virion surface side of the membrane. The helical transmembrane segment at 154-174 (LAAFIYFLHFCLSYMHTLSLV) threads the bilayer. Topologically, residues 175 to 209 (SRNSPKWSVLLMEQHIPKQSLLSTILDYGKPLCVN) are intravirion. A helical transmembrane segment spans residues 210 to 230 (MYLSLLALEMLVFSLGFMMAI). Over 231 to 235 (GNSFY) the chain is Virion surface. A helical transmembrane segment spans residues 236 to 256 (ILVSDTVLASINLYFVLTTFW). Residues 257-269 (YMMTEMFLQDYLK) are Intravirion-facing. A helical membrane pass occupies residues 270-290 (LQFGFYLGVFSGSLILLLPVL). The Virion surface portion of the chain corresponds to 291–304 (RYEAVFVSANLHKT). The helical transmembrane segment at 305-325 (VAVNIAMIPAMCVIAMMFRLF) threads the bilayer. Residues 326 to 366 (RYSQQVRKPENSYTPLPKRFKKRRQKQDQQLIMVETSDEEL) lie on the Intravirion side of the membrane.

The protein belongs to the herpesviridae glycoprotein M family. In terms of assembly, interacts (via N-terminus) with gN (via N-terminus). The gM-gN heterodimer forms the gCII complex.

The protein resides in the virion membrane. Its subcellular location is the host Golgi apparatus. It is found in the host trans-Golgi network. It localises to the host endosome membrane. The protein localises to the host nucleus inner membrane. Its function is as follows. Envelope glycoprotein important for virion assembly and egress. Plays a role in the correct incorporation of gH-gL into virion membrane. Directs the glycoprotein N (gN) to the host trans-Golgi network. This is Envelope glycoprotein M from Saimiri sciureus (Common squirrel monkey).